The following is a 456-amino-acid chain: Glycosyl hydrolase family 109 protein (456 aa).

Positions methionine 1 to alanine 31 form a signal peptide, tat-type signal. Residues glutamine 62–arginine 63, aspartate 84, tryptophan 133–histidine 136, glutamate 153–valine 154, and asparagine 182 each bind NAD(+). Substrate is bound by residues tyrosine 211, arginine 230, tyrosine 242 to histidine 245, and tyrosine 324. Tyrosine 242 lines the NAD(+) pocket.

The protein belongs to the Gfo/Idh/MocA family. Glycosyl hydrolase 109 subfamily. Requires NAD(+) as cofactor. Post-translationally, predicted to be exported by the Tat system. The position of the signal peptide cleavage has not been experimentally proven.

Glycosidase. In Shewanella pealeana (strain ATCC 700345 / ANG-SQ1), this protein is Glycosyl hydrolase family 109 protein.